The following is an 80-amino-acid chain: Exodeoxyribonuclease 7 small subunit (80 aa).

The protein belongs to the XseB family. Heterooligomer composed of large and small subunits.

It localises to the cytoplasm. It catalyses the reaction Exonucleolytic cleavage in either 5'- to 3'- or 3'- to 5'-direction to yield nucleoside 5'-phosphates.. In terms of biological role, bidirectionally degrades single-stranded DNA into large acid-insoluble oligonucleotides, which are then degraded further into small acid-soluble oligonucleotides. This Escherichia coli O6:K15:H31 (strain 536 / UPEC) protein is Exodeoxyribonuclease 7 small subunit.